We begin with the raw amino-acid sequence, 441 residues long: Maltose-6'-phosphate glucosidase MalH (441 aa).

4 to 70 (FSVVIAGGGS…PEIEFLATTN (67 aa)) is a binding site for NAD(+). Positions 93 and 147 each coordinate substrate. A Mn(2+)-binding site is contributed by C169. D170 acts as the Proton donor in catalysis. H200 is a Mn(2+) binding site. The active-site Proton acceptor is Y264. R284 contacts substrate.

In terms of assembly, homotetramer. The cofactor is NAD(+). Mn(2+) is required as a cofactor.

The enzyme catalyses alpha-maltose 6'-phosphate + H2O = D-glucose 6-phosphate + D-glucose. Functionally, catalyzes the hydrolysis of O-alpha-linked disaccharide 6-phosphates, including maltose-6'P and all five phosphorylated isomers of sucrose, but not sucrose-6P. Does not hydrolyze beta-linked disaccharide 6-phosphates such as cellobiose-6'P and gentiobiose-6'P. Is involved in the dissimilation of maltose and related O-alpha-linked glucosides produced via the phosphoenolpyruvate-dependent sugar phosphotransferase system (PEP-PTS). The protein is Maltose-6'-phosphate glucosidase MalH (malH) of Clostridium acetobutylicum (strain ATCC 824 / DSM 792 / JCM 1419 / IAM 19013 / LMG 5710 / NBRC 13948 / NRRL B-527 / VKM B-1787 / 2291 / W).